The chain runs to 373 residues: 3 beta-hydroxysteroid dehydrogenase/Delta 5--&gt;4-isomerase (373 aa).

Y155 functions as the Proton acceptor in the catalytic mechanism. K159 provides a ligand contact to NAD(+). The helical transmembrane segment at 288 to 308 threads the bilayer; that stretch reads ISLEYWLAFLLEIVSFLLSPI.

This sequence belongs to the 3-beta-HSD family.

It localises to the endoplasmic reticulum membrane. Its subcellular location is the mitochondrion membrane. It carries out the reaction a 3beta-hydroxy-Delta(5)-steroid + NAD(+) = a 3-oxo-Delta(5)-steroid + NADH + H(+). It catalyses the reaction a 3-oxo-Delta(5)-steroid = a 3-oxo-Delta(4)-steroid. Its pathway is lipid metabolism; steroid biosynthesis. In terms of biological role, 3-beta-HSD is a bifunctional enzyme, that catalyzes the oxidative conversion of Delta(5)-ene-3-beta-hydroxy steroid, and the oxidative conversion of ketosteroids. The 3-beta-HSD enzymatic system plays a crucial role in the biosynthesis of all classes of hormonal steroids. The sequence is that of 3 beta-hydroxysteroid dehydrogenase/Delta 5--&gt;4-isomerase (HSD3B) from Canis lupus familiaris (Dog).